Consider the following 915-residue polypeptide: MAMLASKSPFPAPLATSGSGMMAGTAQASYPPSRRAPAVPPASQSFSPTESEFSDSDDHDSPKHWDEDKVCEYLRSVRCGEYEKLFRKNHINGENLLEMDKDVLKEMGIEKVGDRVRLFLSIKKLRTKAIAGQKKRNRDSFAGHESMYTPVSESPSKPFHSSSRVMPNPSVNKRYSRQIDLSGMAYDPSRPTTSSRPTSPLPSADFRTARTRNPYVGQQPTPTGSLRGLGSPPDSQANSRPVLTHTRTDSGMDGSLMAALPQNQDVIRVISTGGVTKVVKIADCNTCEEVMRVTLRKFALREDHERNYCFWVLSGLDPDPKQCRRLGDTELWRVIKDQKRPERNRLILRRVPAGEPGQSELERAAAIAMEEAQQSHSRAMDNVGARSQIKVQKVLGENWDNLQPPLSPVLYQDRERNVYNAARDLERPEPLDSGRLQPRRKVLRSFGGLRPPSELIASDLTTYFPDHPREDIDRTARLSMRRSARLSKVNSRLSVASSFSMASSIQDAPPIPTIADSWLQSTPLPKARPRDLQSRLQHGYRDSVASSMLDTLQEEGSPIEPNRKSYVSFADSGSDSAAVSVTDPDGNIVRHSYFDEGSTIGSGSGSGSFGDVSKALNEDGEDADEDLQSFLSGESWDDSKWMKGALIGQGSFGCVYLALHAITGELLAVKQVEAPSPGANSQNDARKKSMIEALKREISLLRDLRHPNIVQYLGCGSSAEYLNIFLEYVPGGSVQTMLNSYGALPEPLVRSFVRQILNGLSYLHEREIIHRDIKGANILVDNKGTIKISDFGISKKIEATNLLNGANNNKHRPSLQGSVFWMAPEVVKQTSYTRKADIWSLGCLVVEMMTGTHPFPDCTQLQAIFKIGGGKATPTIPEDASTEAKAFLAQTFEMDHNKRPSADDLMLSPFLTPIT.

3 disordered regions span residues 1–65 (MAML…PKHW), 134–171 (KKRN…NPSV), and 183–249 (GMAY…TRTD). The segment covering 26 to 45 (AQASYPPSRRAPAVPPASQS) has biased composition (low complexity). An SAM domain is found at 65–128 (WDEDKVCEYL…FLSIKKLRTK (64 aa)). Low complexity-rich tracts occupy residues 152–163 (SESPSKPFHSSS) and 188–203 (PSRP…PLPS). Positions 263–353 (NQDVIRVIST…NRLILRRVPA (91 aa)) constitute a Ras-associating domain. A Protein kinase domain is found at 641-911 (WMKGALIGQG…ADDLMLSPFL (271 aa)). ATP-binding positions include 647–655 (IGQGSFGCV) and K670.

Belongs to the protein kinase superfamily. STE Ser/Thr protein kinase family. MAP kinase kinase kinase subfamily. In terms of assembly, interacts with the adapter protein MST50.

The catalysed reaction is L-seryl-[protein] + ATP = O-phospho-L-seryl-[protein] + ADP + H(+). It catalyses the reaction L-threonyl-[protein] + ATP = O-phospho-L-threonyl-[protein] + ADP + H(+). In terms of biological role, mitogen-activated protein kinase kinase kinase; part of the MST11-MST7-PMK1 MAP kinase (MAPK) cascade that is essential for appressorium formation, penetration and invasive growth. The MST11-MST7-PMK1 MAP kinase cascade transduces signals from the cell surface sensors MDB2 and SHO1 that recognize various surface signals such as surface hydrophobicity, cutin monomers, and rice leaf waxes. MST11 acts as the upstream MAPKKK that directly phosphorylates MAPKK MST7. MST11 but not MST7 may also be involved in the OSM1 MAPK pathway in response to osmotic stresses. The polypeptide is Mitogen-activated protein kinase kinae kinase MST11 (Pyricularia oryzae (strain 70-15 / ATCC MYA-4617 / FGSC 8958) (Rice blast fungus)).